Here is a 250-residue protein sequence, read N- to C-terminus: GILT-like protein 1 (250 aa).

The N-terminal stretch at 1-21 is a signal peptide; sequence MSHKIAAVCLLMSCLIATAYS. Asn157 carries an N-linked (GlcNAc...) asparagine glycan.

Belongs to the GILT family. In terms of processing, conjugated to URM1, a ubiquitin-like protein.

It localises to the secreted. In terms of biological role, involved in the immune response to bacterial infection. The protein is GILT-like protein 1 of Drosophila melanogaster (Fruit fly).